Here is a 178-residue protein sequence, read N- to C-terminus: MESFHGTTILSVRRGEQVAMGGDGQVTLGHIVVKASARKVRRLYREQVLAGFAGATADAFTLFERFESKLEKHQGHLVRAAVELTRDWRTDRVLRRLEAMLAVADRSASLIITGNGDVLEPEYGIVAIGSGGAYAQAAARAMLQHTEQSPADIVKRSLEIAGDLCIYTNQSHTIETLE.

Thr7 is an active-site residue. Residues Gly162, Cys165, and Thr168 each coordinate Na(+).

The protein belongs to the peptidase T1B family. HslV subfamily. In terms of assembly, a double ring-shaped homohexamer of HslV is capped on each side by a ring-shaped HslU homohexamer. The assembly of the HslU/HslV complex is dependent on binding of ATP.

It localises to the cytoplasm. It carries out the reaction ATP-dependent cleavage of peptide bonds with broad specificity.. Its activity is regulated as follows. Allosterically activated by HslU binding. In terms of biological role, protease subunit of a proteasome-like degradation complex believed to be a general protein degrading machinery. This chain is ATP-dependent protease subunit HslV, found in Leptothrix cholodnii (strain ATCC 51168 / LMG 8142 / SP-6) (Leptothrix discophora (strain SP-6)).